The following is a 764-amino-acid chain: PFL-like enzyme TdcE (764 aa).

Positions 7–629 (TSDKLYADAW…KTGNTPDGRR (623 aa)) constitute a PFL domain. Catalysis depends on Cys423, which acts as the S-acetylcysteine intermediate. Residue Cys424 is the Cysteine radical intermediate of the active site. The interval 622 to 645 (GNTPDGRRAGTPFAPGANPMHGRD) is disordered. The Glycine radical domain maps to 636-764 (PGANPMHGRD…VISRTFTQAL (129 aa)). Gly739 is modified (glycine radical).

Belongs to the glycyl radical enzyme (GRE) family. PFL subfamily.

The protein resides in the cytoplasm. The catalysed reaction is 2-oxobutanoate + CoA = propanoyl-CoA + formate. It catalyses the reaction formate + acetyl-CoA = pyruvate + CoA. Its pathway is amino-acid degradation; L-threonine degradation via propanoate pathway; propanoate from L-threonine: step 2/4. Its activity is regulated as follows. Dependent on PFL-activase. In terms of biological role, catalyzes the cleavage of 2-ketobutyrate to propionyl-CoA and formate. It can also use pyruvate as substrate. The sequence is that of PFL-like enzyme TdcE (tdcE) from Escherichia coli (strain K12).